The chain runs to 329 residues: GDP-mannose transporter (329 aa).

Residues 1 to 11 (MADKGSVAAKS) are Cytoplasmic-facing. Residues 12-32 (LTNSAPLSIFSYCAASILMTV) form a helical membrane-spanning segment. Residues 33 to 40 (TNKYAVSG) are Lumenal-facing. Residues 41–61 (VDFNFNFFLLAVQGIVCITLI) form a helical membrane-spanning segment. Residues 62 to 83 (SSLKQLNVITFREFNKVEAKKW) lie on the Cytoplasmic side of the membrane. A helical membrane pass occupies residues 84–104 (FPIAVLLVVMIYTSSKALQYL). Over 105-107 (SIP) the chain is Lumenal. The helical transmembrane segment at 108–128 (IYTIFKNLTIILIAYGEVIWF) threads the bilayer. Topologically, residues 129-131 (GGR) are cytoplasmic. The helical transmembrane segment at 132–152 (VTNLALGSFVLMVLSSAVASY) threads the bilayer. Residues 153–163 (GDSNVDTGKLN) lie on the Lumenal side of the membrane. Residues 164-184 (FNIGYFWMFTNCFSSAAFVLF) form a helical membrane-spanning segment. Topologically, residues 185 to 196 (MRKRIKLTNFKD) are cytoplasmic. A helical membrane pass occupies residues 197-217 (FDTMYYNNLLSIPILLFASLT). Topologically, residues 218 to 237 (TEDWSAKNIAQNFPEDTKYA) are lumenal. A helical transmembrane segment spans residues 238 to 258 (VIASMIISGMSAVGISYTSAW). At 259 to 266 (CVRVTSST) the chain is on the cytoplasmic side. A helical transmembrane segment spans residues 267–287 (TYSMVGALNKLPIALSGLLFF). Residues 288 to 290 (KAP) lie on the Lumenal side of the membrane. The helical transmembrane segment at 291–311 (INFYSISSIFIGFAAGLVYAI) threads the bilayer. Residues 312–329 (AKQKQKKEDELQLPTDKS) are Cytoplasmic-facing.

The protein belongs to the TPT transporter family. SLC35D subfamily. Homooligomer.

Its subcellular location is the golgi apparatus membrane. The protein resides in the cytoplasmic vesicle membrane. It localises to the endoplasmic reticulum membrane. Involved in the import of GDP-mannose from the cytoplasm into the Golgi lumen. The protein is GDP-mannose transporter (VIG4) of Komagataella pastoris (Yeast).